A 172-amino-acid chain; its full sequence is Cytidylate kinase (172 aa).

Residue 8-16 (GPPGSGKST) coordinates ATP.

This sequence belongs to the cytidylate kinase family. Type 2 subfamily.

The protein resides in the cytoplasm. The catalysed reaction is CMP + ATP = CDP + ADP. It catalyses the reaction dCMP + ATP = dCDP + ADP. The sequence is that of Cytidylate kinase from Ignicoccus hospitalis (strain KIN4/I / DSM 18386 / JCM 14125).